Here is a 264-residue protein sequence, read N- to C-terminus: Thymidylate synthase (264 aa).

A dUMP-binding site is contributed by arginine 21. Histidine 51 is a (6R)-5,10-methylene-5,6,7,8-tetrahydrofolate binding site. 126–127 (RR) is a dUMP binding site. Cysteine 146 acts as the Nucleophile in catalysis. DUMP contacts are provided by residues 166-169 (RSAD), asparagine 177, and 207-209 (HIY). Aspartate 169 lines the (6R)-5,10-methylene-5,6,7,8-tetrahydrofolate pocket. Position 263 (alanine 263) interacts with (6R)-5,10-methylene-5,6,7,8-tetrahydrofolate.

Belongs to the thymidylate synthase family. Bacterial-type ThyA subfamily. As to quaternary structure, homodimer.

The protein localises to the cytoplasm. The catalysed reaction is dUMP + (6R)-5,10-methylene-5,6,7,8-tetrahydrofolate = 7,8-dihydrofolate + dTMP. The protein operates within pyrimidine metabolism; dTTP biosynthesis. Functionally, catalyzes the reductive methylation of 2'-deoxyuridine-5'-monophosphate (dUMP) to 2'-deoxythymidine-5'-monophosphate (dTMP) while utilizing 5,10-methylenetetrahydrofolate (mTHF) as the methyl donor and reductant in the reaction, yielding dihydrofolate (DHF) as a by-product. This enzymatic reaction provides an intracellular de novo source of dTMP, an essential precursor for DNA biosynthesis. This is Thymidylate synthase from Bacteroides thetaiotaomicron (strain ATCC 29148 / DSM 2079 / JCM 5827 / CCUG 10774 / NCTC 10582 / VPI-5482 / E50).